Reading from the N-terminus, the 167-residue chain is Putative 4-hydroxy-4-methyl-2-oxoglutarate aldolase (167 aa).

Residues 81 to 84 (GDII) and R103 each bind substrate. An a divalent metal cation-binding site is contributed by D104.

It belongs to the class II aldolase/RraA-like family. As to quaternary structure, homotrimer. Requires a divalent metal cation as cofactor.

It catalyses the reaction 4-hydroxy-4-methyl-2-oxoglutarate = 2 pyruvate. The enzyme catalyses oxaloacetate + H(+) = pyruvate + CO2. Catalyzes the aldol cleavage of 4-hydroxy-4-methyl-2-oxoglutarate (HMG) into 2 molecules of pyruvate. Also contains a secondary oxaloacetate (OAA) decarboxylase activity due to the common pyruvate enolate transition state formed following C-C bond cleavage in the retro-aldol and decarboxylation reactions. In Corynebacterium jeikeium (strain K411), this protein is Putative 4-hydroxy-4-methyl-2-oxoglutarate aldolase.